We begin with the raw amino-acid sequence, 512 residues long: ATP synthase subunit alpha (512 aa).

169-176 (GDRQTGKT) contributes to the ATP binding site.

This sequence belongs to the ATPase alpha/beta chains family. As to quaternary structure, F-type ATPases have 2 components, CF(1) - the catalytic core - and CF(0) - the membrane proton channel. CF(1) has five subunits: alpha(3), beta(3), gamma(1), delta(1), epsilon(1). CF(0) has three main subunits: a(1), b(2) and c(9-12). The alpha and beta chains form an alternating ring which encloses part of the gamma chain. CF(1) is attached to CF(0) by a central stalk formed by the gamma and epsilon chains, while a peripheral stalk is formed by the delta and b chains.

The protein resides in the cell inner membrane. The catalysed reaction is ATP + H2O + 4 H(+)(in) = ADP + phosphate + 5 H(+)(out). Functionally, produces ATP from ADP in the presence of a proton gradient across the membrane. The alpha chain is a regulatory subunit. This Azoarcus sp. (strain BH72) protein is ATP synthase subunit alpha.